Reading from the N-terminus, the 273-residue chain is Programmed cell death 1 ligand 2 (273 aa).

Residues M1–A19 form the signal peptide. Over L20–T220 the chain is Extracellular. An Ig-like V-type domain is found at F21–K118. N-linked (GlcNAc...) asparagine glycans are attached at residues N37, N64, N157, N163, and N189. 2 disulfide bridges follow: C42/C102 and C143/C192. The region spanning S122–T203 is the Ig-like C2-type domain. Residues W221 to I241 traverse the membrane as a helical segment. Topologically, residues A242–I273 are cytoplasmic.

This sequence belongs to the immunoglobulin superfamily. BTN/MOG family. In terms of assembly, interacts with PDCD1. In terms of tissue distribution, highly expressed in heart, placenta, pancreas, lung and liver and weakly expressed in spleen, lymph nodes and thymus.

The protein localises to the secreted. It is found in the endomembrane system. It localises to the cell membrane. In terms of biological role, involved in the costimulatory signal, essential for T-cell proliferation and IFNG production in a PDCD1-independent manner. Interaction with PDCD1 inhibits T-cell proliferation by blocking cell cycle progression and cytokine production. This is Programmed cell death 1 ligand 2 (PDCD1LG2) from Homo sapiens (Human).